An 873-amino-acid chain; its full sequence is Coatomer subunit gamma-2 (873 aa).

The span at 1-11 (MIKKFDKKDEE) shows a compositional bias: basic and acidic residues. The disordered stretch occupies residues 1-21 (MIKKFDKKDEESGSGSNPFQN). HEAT repeat units follow at residues 64 to 101 (TEATEAFFAMTRLFQSNDQTLRRMCYLTIKEMANISED), 283 to 320 (RELAPAVSVLQLFCSSPKAALRYAAVRTLNKVAMKHPS), 321 to 355 (AVTACNLDLENLITDSNRSIATLAITTLLKTGSES), 356 to 392 (SVDRLMKQISSFVSEISDEFKVVVVQAISALCQKYPR), 394 to 430 (HSAMMNFLSNMLRDDGGFEYKRAIVDCIISIIEENPE), and 467 to 504 (PQPSKYIRFIFNRVVLESEAVRAAAVSALAKFGAQNDD).

The protein belongs to the COPG family. Oligomeric complex.

Its subcellular location is the cytoplasm. It localises to the golgi apparatus membrane. The protein resides in the cytoplasmic vesicle. It is found in the COPI-coated vesicle membrane. The coatomer is a cytosolic protein complex that binds to dilysine motifs and reversibly associates with Golgi non-clathrin-coated vesicles, which further mediate biosynthetic protein transport from the ER, via the Golgi up to the trans Golgi network. Coatomer complex is required for budding from Golgi membranes, and is essential for the retrograde Golgi-to-ER transport of dilysine-tagged proteins. In Takifugu rubripes (Japanese pufferfish), this protein is Coatomer subunit gamma-2 (copg2).